The primary structure comprises 30 residues: Photosystem I reaction center subunit XII (30 aa).

A helical membrane pass occupies residues 7–26 (IMVALFAALFTGILALRLGT).

This sequence belongs to the PsaM family.

Its subcellular location is the plastid. It localises to the chloroplast thylakoid membrane. The sequence is that of Photosystem I reaction center subunit XII from Mesostigma viride (Green alga).